The chain runs to 146 residues: Hemoglobin subunit beta-1 (146 aa).

The region spanning 2–146 (GLTAHDRQLI…IADALGKGYH (145 aa)) is the Globin domain. Heme b-binding residues include His63 and His92.

The protein belongs to the globin family. Heterotetramer of two alpha chains and two beta chains. Red blood cells.

Its function is as follows. Involved in oxygen transport from the lung to the various peripheral tissues. This Xenopus borealis (Kenyan clawed frog) protein is Hemoglobin subunit beta-1 (hbb1).